The sequence spans 668 residues: Spartin (668 aa).

At Met-1 the chain carries N-acetylmethionine. In terms of domain architecture, MIT spans 16 to 94 (IKEAYKKAFV…LQNVRTRLEI (79 aa)). A disordered region spans residues 110–176 (VPKLYPEFPP…PSEAPPAYTP (67 aa)). A compositionally biased stretch (basic and acidic residues) spans 118 to 127 (PPKDMSEKSP). A Phosphoserine modification is found at Ser-126. Low complexity predominate over residues 128–162 (EPQSLSSLPQHSEVNGSTSTASAESSSTPTTLSLP). A ubiquitin-binding region (UBR) domain region spans residues 190-380 (ESGEFSSVGE…QLDPSSKDVR (191 aa)). The short motif at 193–200 (EFSSVGEN) is the LC3-interacting region (LIR); mediates interaction with MAP1LC3A AND MAP1LC3C element. Residues 348–396 (FQIPGISGSASDQLKEASGTDVRQLDPSSKDVRQKGKRGKKTKGTSSEE) are disordered. A Glycyl lysine isopeptide (Lys-Gly) (interchain with G-Cter in ubiquitin) cross-link involves residue Lys-362. Positions 427–611 (ILSGASWVSW…YNIDNIGIKA (185 aa)) constitute a Senescence domain. Residues 431–503 (ASWVSWGLVK…LVDGVCTVAN (73 aa)) are required for localization to lipid droplets. Phosphoserine is present on Ser-470. The disordered stretch occupies residues 631–668 (IDNSKGENPGGGASANLKGEKDEQKEGPEKNGAKKKDK). Residues 648 to 668 (KGEKDEQKEGPEKNGAKKKDK) show a composition bias toward basic and acidic residues.

As to quaternary structure, interacts with ITCH and WWP1. Interacts (via MIT domain) with IST1; leading to the recruitment of SPART to midbodies. Interacts with MAP1LC3A and MAP1LC3C. Ubiquitinated; ubiquitination does not require ITCH and WWP1.

Its subcellular location is the cytoplasm. The protein resides in the midbody. It is found in the lipid droplet. Its function is as follows. Lipophagy receptor that plays an important role in lipid droplet (LD) turnover in motor neurons. Localizes to LDs and interacts with components of the autophagy machinery, such as MAP1LC3A/C proteins to deliver LDs to autophagosomes for degradation via lipophagy. Lipid transfer protein required for lipid droplet degradation, including by lipophagy. Can bind and transfer all lipid species found in lipid droplets, from phospholipids to triglycerides and sterol esters but the direction of lipid transfer by spartin and its cargos are unknown. May be implicated in endosomal trafficking, or microtubule dynamics, or both. Participates in cytokinesis. The protein is Spartin of Bos taurus (Bovine).